A 105-amino-acid polypeptide reads, in one-letter code: Protein RALF-like 21 (105 aa).

An N-terminal signal peptide occupies residues 1-30 (MSNMKITNRFMLVATFIACVFISSMNMTVG). 2 cysteine pairs are disulfide-bonded: Cys-44–Cys-53 and Cys-67–Cys-73.

This sequence belongs to the plant rapid alkalinization factor (RALF) family. As to expression, expressed in seeds and rosettes.

Its subcellular location is the secreted. Functionally, cell signaling peptide that may regulate plant stress, growth, and development. Mediates a rapid alkalinization of extracellular space by mediating a transient increase in the cytoplasmic Ca(2+) concentration leading to a calcium-dependent signaling events through a cell surface receptor and a concomitant activation of some intracellular mitogen-activated protein kinases. This Arabidopsis thaliana (Mouse-ear cress) protein is Protein RALF-like 21 (RALFL21).